A 165-amino-acid chain; its full sequence is UPF0303 protein BTH_I2506 (165 aa).

Belongs to the UPF0303 family.

The protein is UPF0303 protein BTH_I2506 of Burkholderia thailandensis (strain ATCC 700388 / DSM 13276 / CCUG 48851 / CIP 106301 / E264).